The chain runs to 183 residues: Peptidyl-tRNA hydrolase (183 aa).

Tyr-14 is a binding site for tRNA. Catalysis depends on His-19, which acts as the Proton acceptor. The tRNA site is built by Tyr-61, Asn-63, and Asn-109.

The protein belongs to the PTH family. In terms of assembly, monomer.

The protein resides in the cytoplasm. It catalyses the reaction an N-acyl-L-alpha-aminoacyl-tRNA + H2O = an N-acyl-L-amino acid + a tRNA + H(+). Functionally, hydrolyzes ribosome-free peptidyl-tRNAs (with 1 or more amino acids incorporated), which drop off the ribosome during protein synthesis, or as a result of ribosome stalling. In terms of biological role, catalyzes the release of premature peptidyl moieties from peptidyl-tRNA molecules trapped in stalled 50S ribosomal subunits, and thus maintains levels of free tRNAs and 50S ribosomes. This Aliarcobacter butzleri (strain RM4018) (Arcobacter butzleri) protein is Peptidyl-tRNA hydrolase.